A 250-amino-acid chain; its full sequence is Cell division protein ZapD (250 aa).

The protein belongs to the ZapD family. As to quaternary structure, interacts with FtsZ.

It localises to the cytoplasm. Its function is as follows. Cell division factor that enhances FtsZ-ring assembly. Directly interacts with FtsZ and promotes bundling of FtsZ protofilaments, with a reduction in FtsZ GTPase activity. The chain is Cell division protein ZapD from Photorhabdus laumondii subsp. laumondii (strain DSM 15139 / CIP 105565 / TT01) (Photorhabdus luminescens subsp. laumondii).